The following is a 247-amino-acid chain: Carboxy-S-adenosyl-L-methionine synthase (247 aa).

S-adenosyl-L-methionine is bound by residues Tyr-40, 65–67 (GSS), 90–91 (DN), 122–123 (DI), Asn-137, and Arg-204.

This sequence belongs to the class I-like SAM-binding methyltransferase superfamily. Cx-SAM synthase family. In terms of assembly, homodimer.

The catalysed reaction is prephenate + S-adenosyl-L-methionine = carboxy-S-adenosyl-L-methionine + 3-phenylpyruvate + H2O. Catalyzes the conversion of S-adenosyl-L-methionine (SAM) to carboxy-S-adenosyl-L-methionine (Cx-SAM). In Pseudomonas savastanoi pv. phaseolicola (strain 1448A / Race 6) (Pseudomonas syringae pv. phaseolicola (strain 1448A / Race 6)), this protein is Carboxy-S-adenosyl-L-methionine synthase.